Reading from the N-terminus, the 245-residue chain is Protein-glutamine gamma-glutamyltransferase (245 aa).

The protein belongs to the bacillus TGase family.

The enzyme catalyses L-glutaminyl-[protein] + L-lysyl-[protein] = [protein]-L-lysyl-N(6)-5-L-glutamyl-[protein] + NH4(+). Its function is as follows. Probably plays a role in the assembly of the spore coat proteins by catalyzing epsilon-(gamma-glutamyl)lysine cross-links. In wild-type spores at 37 degrees Celsius, tgl mediates the cross-linking of GerQ in higher molecular mass forms, probably in cooperation with YabG. The chain is Protein-glutamine gamma-glutamyltransferase (tgl) from Bacillus subtilis (strain 168).